The primary structure comprises 271 residues: MRPSDLTRFKQKGQPIAVLTAWDSLSAALAEAAGADVLLIGDSLAMVALGHATTLPVSLDQMLHHTQAVARGLTTMPADQPLLVCDLPFLSYQCGEDRAVAAAGRLLKESSAAAVKLEGAEPEVVAVIDRLVRMGIPVMGHLGLTPQAVHRLGYRRQATDAISQERLLEQACTLEQKGCFSLVLEHVPAELACRVQQALTIPVIGIGAGDDCDGQVRVTADLLGLTAKQPPFSPALVDGRRLFIDALKGWVNQTRNHTPPTNGRITQADRT.

Positions 42 and 86 each coordinate Mg(2+). Residues 42–43, Asp86, and Lys116 contribute to the 3-methyl-2-oxobutanoate site; that span reads DS. Glu118 serves as a coordination point for Mg(2+). Catalysis depends on Glu185, which acts as the Proton acceptor.

The protein belongs to the PanB family. As to quaternary structure, homodecamer; pentamer of dimers. The cofactor is Mg(2+).

Its subcellular location is the cytoplasm. The catalysed reaction is 3-methyl-2-oxobutanoate + (6R)-5,10-methylene-5,6,7,8-tetrahydrofolate + H2O = 2-dehydropantoate + (6S)-5,6,7,8-tetrahydrofolate. It participates in cofactor biosynthesis; (R)-pantothenate biosynthesis; (R)-pantoate from 3-methyl-2-oxobutanoate: step 1/2. In terms of biological role, catalyzes the reversible reaction in which hydroxymethyl group from 5,10-methylenetetrahydrofolate is transferred onto alpha-ketoisovalerate to form ketopantoate. In Synechococcus sp. (strain CC9605), this protein is 3-methyl-2-oxobutanoate hydroxymethyltransferase.